We begin with the raw amino-acid sequence, 819 residues long: Sulfate permease 2 (819 aa).

N-linked (GlcNAc...) asparagine glycosylation occurs at Asn-24. Transmembrane regions (helical) follow at residues 72-92, 104-124, 129-149, 172-192, 194-214, 273-293, 328-348, 365-385, 454-474, and 477-497; these read YNLT…FVVV, LAPE…WAFA, ITIG…ANVQ, LLFL…IVAI, AFMT…LMGI, FFVS…VSWL, ILSA…IEHI, SQEL…GGYP, FWLT…VSIF, and IENG…WRIA. Residues 551–708 form the STAS domain; it reads ELQISTPWPG…ENHKGGVQEV (158 aa). An N-linked (GlcNAc...) asparagine glycan is attached at Asn-581. The tract at residues 726-766 is disordered; it reads EAVPVGTSGSGSTDEKRPEGEGGATNGGMEKGSANGEDIST. Gly residues predominate over residues 746 to 755; sequence EGGATNGGME.

This sequence belongs to the SLC26A/SulP transporter (TC 2.A.53) family. In terms of tissue distribution, mainly found in mycelia.

The protein localises to the membrane. In terms of biological role, uptake of sulfate into the cell. The protein is Sulfate permease 2 (cys-14) of Neurospora crassa (strain ATCC 24698 / 74-OR23-1A / CBS 708.71 / DSM 1257 / FGSC 987).